Consider the following 754-residue polypeptide: Phosphatidylinositol 4-phosphate 5-kinase 7 (754 aa).

MORN repeat units follow at residues 16-38 (YSGE…DGTI), 39-61 (YEGD…SGAK), 62-84 (YEGD…DESV), 85-107 (YSGA…NSDL), 108-130 (YDGL…NGNR), 131-153 (YIGN…NGDL), 154-176 (YDGF…DGCL), and 177-198 (YYGT…AGTK). A PIPK domain is found at 329 to 750 (GEHNYYLMLN…RFVNFLHKVF (422 aa)). The interval 710 to 731 (YNTKKKVEHTCKSLQYDPMTIS) is activation loop.

The catalysed reaction is a 1,2-diacyl-sn-glycero-3-phospho-(1D-myo-inositol 4-phosphate) + ATP = a 1,2-diacyl-sn-glycero-3-phospho-(1D-myo-inositol-4,5-bisphosphate) + ADP + H(+). In Arabidopsis thaliana (Mouse-ear cress), this protein is Phosphatidylinositol 4-phosphate 5-kinase 7 (PIP5K7).